Here is a 223-residue protein sequence, read N- to C-terminus: Probable glutathione S-transferase (223 aa).

Positions 2–81 constitute a GST N-terminal domain; it reads AEVKLLGFWY…YIDETFEGPS (80 aa). Glutathione is bound by residues serine 12, lysine 39, valine 53, and 65 to 66; that span reads ES. Positions 86–212 constitute a GST C-terminal domain; the sequence is DPYDRALARF…ELLAFFRARF (127 aa).

It belongs to the GST superfamily. HSP26 family. In terms of tissue distribution, root tip-specific expression.

It carries out the reaction RX + glutathione = an S-substituted glutathione + a halide anion + H(+). The chain is Probable glutathione S-transferase from Nicotiana tabacum (Common tobacco).